The chain runs to 337 residues: MAELAHQQSKRKRELDAEEAEASSTEGEEAGVGNGTSAPVRLPFSGFRVKKVLRESARDKIIFLHGKVNEASGDGDGEDAVVILEKTPFQVDQVAQLLKGSPELQLQFSNDVYSTYHLFPPRQLSDVKTTVVYPATEKHLQKYLRQDLHLVRETGSDYRNVTLPHLESQSLSIQWVYNILDKKAEADRIVFENPDPSDGFVLIPDLKWNQQQLDDLYLIAICHRRGIKSLRDLTAEHLPLLRNILREGQEAILRRYQVAADRLRVYLHYLPSYYHLHVHFTALGFEAPGAGVERAHLLAEVIDNLEQDPEHYQRRTLTFALRADDPLLALLQEAQRS.

The tract at residues 1 to 37 is disordered; that stretch reads MAELAHQQSKRKRELDAEEAEASSTEGEEAGVGNGTS. At A2 the chain carries N-acetylalanine. Positions 10–13 match the nuclear localization signal (NLS) motif; sequence KRKR. The segment covering 16 to 29 has biased composition (acidic residues); it reads DAEEAEASSTEGEE. Residues S24 and S101 each carry the phosphoserine modification. An N6-acetyllysine mark is found at K138 and K142. The nuclear export sequence (NES) signature appears at 142-154; the sequence is KYLRQDLHLVRET. Substrate contacts are provided by residues W175, E185, D205, K207, and 268–279; that span reads HYLPSYYHLHVH. The Histidine triad motif signature appears at 275-279; that stretch reads HLHVH. Residue H277 is the Nucleophile of the active site.

The protein belongs to the HIT family. As to quaternary structure, homodimer. Associates with components of the exosome multienzyme ribonuclease complex, such as EXOSC3 and EXOSC4. Interacts with NDOR1.

Its subcellular location is the cytoplasm. The protein resides in the nucleus. It catalyses the reaction a 5'-end (N(7)-methyl 5'-triphosphoguanosine)-ribonucleoside in mRNA + H2O = N(7)-methyl-GMP + a 5'-end diphospho-ribonucleoside in mRNA + 2 H(+). With respect to regulation, the hydrolytic product 7-methylguanosine diphosphate (m7GDP) efficiently inhibits the decapping scavenger activity and acts as a competitive inhibitor in vitro. Inhibited by 2,4-diaminoquinazoline. Decapping scavenger enzyme that catalyzes the cleavage of a residual cap structure following the degradation of mRNAs by 3'-&gt;5' exosome-mediated mRNA decay pathway. Hydrolyzes cap analog structures like 7-methylguanosine nucleoside triphosphate (m7GpppG) with up to 10 nucleotide substrates (small capped oligoribonucleotides) and specifically releases 5'-phosphorylated RNA fragments and 7-methylguanosine monophosphate (m7GMP). Cleaves cap analog structures like tri-methyl guanosine nucleoside triphosphate (m3(2,2,7)GpppG) with very poor efficiency. Does not hydrolyze unmethylated cap analog (GpppG) and shows no decapping activity on intact m7GpppG-capped mRNA molecules longer than 25 nucleotides. Does not hydrolyze 7-methylguanosine diphosphate (m7GDP) to m7GMP. May also play a role in the 5'-&gt;3 mRNA decay pathway; m7GDP, the downstream product released by the 5'-&gt;3' mRNA mediated decapping activity, may be also converted by DCPS to m7GMP. Binds to m7GpppG and strongly to m7GDP. Plays a role in first intron splicing of pre-mRNAs. Inhibits activation-induced cell death. This chain is m7GpppX diphosphatase (DCPS), found in Bos taurus (Bovine).